The sequence spans 481 residues: Aspartyl/glutamyl-tRNA(Asn/Gln) amidotransferase subunit B (481 aa).

It belongs to the GatB/GatE family. GatB subfamily. As to quaternary structure, heterotrimer of A, B and C subunits.

It carries out the reaction L-glutamyl-tRNA(Gln) + L-glutamine + ATP + H2O = L-glutaminyl-tRNA(Gln) + L-glutamate + ADP + phosphate + H(+). It catalyses the reaction L-aspartyl-tRNA(Asn) + L-glutamine + ATP + H2O = L-asparaginyl-tRNA(Asn) + L-glutamate + ADP + phosphate + 2 H(+). Allows the formation of correctly charged Asn-tRNA(Asn) or Gln-tRNA(Gln) through the transamidation of misacylated Asp-tRNA(Asn) or Glu-tRNA(Gln) in organisms which lack either or both of asparaginyl-tRNA or glutaminyl-tRNA synthetases. The reaction takes place in the presence of glutamine and ATP through an activated phospho-Asp-tRNA(Asn) or phospho-Glu-tRNA(Gln). The chain is Aspartyl/glutamyl-tRNA(Asn/Gln) amidotransferase subunit B from Pseudomonas syringae pv. syringae (strain B728a).